Consider the following 1438-residue polypeptide: Pyochelin synthetase PchE (1438 aa).

The region spanning 6–85 (DSRTALRDWL…AWLDLLACAD (80 aa)) is the Carrier 1 domain. Ser46 is modified (O-(pantetheine 4'-phosphoryl)serine). The condensation/cyclization stretch occupies residues 136 to 442 (RTRDVDPQRL…ARRQGQPRSA (307 aa)). The interval 563 to 950 (RAAEAPDADA…GRVDQQVKVR (388 aa)) is adenylation. Residues 1350-1425 (EPLEAHEQAL…GLARHLQVQT (76 aa)) enclose the Carrier 2 domain. Ser1385 bears the O-(pantetheine 4'-phosphoryl)serine mark.

Belongs to the NRP synthetase family. Pantetheine 4'-phosphate is required as a cofactor.

It catalyses the reaction holo-[peptidyl-carrier protein] + L-cysteine + ATP = L-cysteinyl-[peptidyl-carrier protein] + AMP + diphosphate. It participates in siderophore biosynthesis. It functions in the pathway antifungal biosynthesis. Functionally, involved in the biosynthesis of the siderophore pyochelin. Accepts salicylate activated by PchD at the first peptidyl carrier domain (ArCP), and activates and fixes one molecule of cysteine at the second peptidyl carrier domain (PCP1) via a thioester linkage to the phosphopanthetheine moiety. Then catalyzes the condensation reaction between the salicylate bound to the first site and the cysteine bound to the second site, and the cyclization of the cysteine to form the salicyl-thiazolinyl-S-PCP1 intermediate at the second site. When this intermediate is released by the action of a thioesterase, it produces the antifungal antibiotic dihydroaeruginoic acid (Dha or hydroxyphenyl-thiazolinyl-carboxylate). The protein is Pyochelin synthetase PchE of Pseudomonas aeruginosa (strain ATCC 15692 / DSM 22644 / CIP 104116 / JCM 14847 / LMG 12228 / 1C / PRS 101 / PAO1).